The chain runs to 329 residues: Malate dehydrogenase (329 aa).

12-18 (GAAGQIG) is an NAD(+) binding site. Positions 95 and 101 each coordinate substrate. Residues Asn-108, Gln-115, and 132 to 134 (VGN) contribute to the NAD(+) site. 2 residues coordinate substrate: Asn-134 and Arg-165. His-190 acts as the Proton acceptor in catalysis.

This sequence belongs to the LDH/MDH superfamily. MDH type 2 family.

The catalysed reaction is (S)-malate + NAD(+) = oxaloacetate + NADH + H(+). In terms of biological role, catalyzes the reversible oxidation of malate to oxaloacetate. This chain is Malate dehydrogenase, found in Bordetella petrii (strain ATCC BAA-461 / DSM 12804 / CCUG 43448).